We begin with the raw amino-acid sequence, 284 residues long: Deoxyribonuclease-1 (284 aa).

A signal peptide spans methionine 1 to alanine 22. An N-linked (GlcNAc...) asparagine glycan is attached at asparagine 40. Residue glutamate 100 is part of the active site. Cysteine 123 and cysteine 126 are oxidised to a cystine. N-linked (GlcNAc...) asparagine glycosylation occurs at asparagine 128. Residue histidine 156 is part of the active site. A disulfide bridge connects residues cysteine 195 and cysteine 231.

This sequence belongs to the DNase I family. Ca(2+) is required as a cofactor. Requires Mg(2+) as cofactor. In terms of tissue distribution, highest expression in pancreas.

It is found in the secreted. The protein localises to the zymogen granule. Its subcellular location is the nucleus envelope. The enzyme catalyses Endonucleolytic cleavage to 5'-phosphodinucleotide and 5'-phosphooligonucleotide end-products.. Its function is as follows. Serum endocuclease secreted into body fluids by a wide variety of exocrine and endocrine organs. Expressed by non-hematopoietic tissues and preferentially cleaves protein-free DNA. Among other functions, seems to be involved in cell death by apoptosis. Binds specifically to G-actin and blocks actin polymerization. Together with DNASE1L3, plays a key role in degrading neutrophil extracellular traps (NETs). NETs are mainly composed of DNA fibers and are released by neutrophils to bind pathogens during inflammation. Degradation of intravascular NETs by DNASE1 and DNASE1L3 is required to prevent formation of clots that obstruct blood vessels and cause organ damage following inflammation. This chain is Deoxyribonuclease-1 (DNASE1), found in Canis lupus familiaris (Dog).